A 160-amino-acid polypeptide reads, in one-letter code: Large ribosomal subunit protein uL22c (160 aa).

It belongs to the universal ribosomal protein uL22 family. In terms of assembly, part of the 50S ribosomal subunit.

It is found in the plastid. The protein localises to the chloroplast. In terms of biological role, this protein binds specifically to 23S rRNA. Functionally, the globular domain of the protein is located near the polypeptide exit tunnel on the outside of the subunit, while an extended beta-hairpin is found that lines the wall of the exit tunnel in the center of the 70S ribosome. In Crucihimalaya wallichii (Rock-cress), this protein is Large ribosomal subunit protein uL22c (rpl22).